The primary structure comprises 323 residues: tRNA N6-adenosine threonylcarbamoyltransferase (323 aa).

3 residues coordinate Fe cation: histidine 106, histidine 110, and tyrosine 127. Substrate is bound by residues 127–131 (YVSGA), aspartate 159, glycine 172, glutamate 176, and asparagine 255. Aspartate 283 provides a ligand contact to Fe cation.

The protein belongs to the KAE1 / TsaD family. As to quaternary structure, monomer. Component of the KEOPS complex that consists of Kae1, Bud32, Cgi121 and Pcc1; the whole complex dimerizes. Fe(2+) serves as cofactor.

The protein localises to the cytoplasm. The catalysed reaction is L-threonylcarbamoyladenylate + adenosine(37) in tRNA = N(6)-L-threonylcarbamoyladenosine(37) in tRNA + AMP + H(+). Its function is as follows. Required for the formation of a threonylcarbamoyl group on adenosine at position 37 (t(6)A37) in tRNAs that read codons beginning with adenine. Is a component of the KEOPS complex that is probably involved in the transfer of the threonylcarbamoyl moiety of threonylcarbamoyl-AMP (TC-AMP) to the N6 group of A37. Kae1 likely plays a direct catalytic role in this reaction, but requires other protein(s) of the complex to fulfill this activity. This Methanocella arvoryzae (strain DSM 22066 / NBRC 105507 / MRE50) protein is tRNA N6-adenosine threonylcarbamoyltransferase.